Consider the following 954-residue polypeptide: Kinesin-like protein KIN-14Q (954 aa).

One can recognise a Calponin-homology (CH) domain in the interval 33-155; that stretch reads AMRRYDAASW…CVLALKSFSE (123 aa). The 326-residue stretch at 374–699 folds into the Kinesin motor domain; the sequence is NIRVYCRVRP…LKFAERVASV (326 aa). Residue 457 to 464 coordinates ATP; that stretch reads GQTGSGKT. The stretch at 704 to 733 forms a coiled coil; that stretch reads AKANKEGSEVRELKEQIATLKAALAKKEGE. A compositionally biased stretch (basic and acidic residues) spans 844-855; the sequence is YDPDKQRRRAEP. Disordered regions lie at residues 844 to 876 and 912 to 954; these read YDPD…DQEM and PNLA…NTPK. Low complexity predominate over residues 864–873; sequence FDAATSSPSD. A compositionally biased stretch (polar residues) spans 928–954; that stretch reads PIRNSKQLPFSTTGGRRTRNGKINTPK.

This sequence belongs to the TRAFAC class myosin-kinesin ATPase superfamily. Kinesin family. KIN-14 subfamily. As to quaternary structure, forms oligomers in vitro. Interacts with actin microfilaments. Binds to actin in vitro through its calponin-homology (CH) domain. As to expression, expressed in primary leaf, primary root, developing flower and coleoptile.

Its subcellular location is the cytoplasm. The protein localises to the cytoskeleton. With respect to regulation, the microtubule-dependent ATPase activity is regulated by actin binding. In terms of biological role, minus end-directed motor protein that transports actin filaments along microtubules. Plays a central role in the polar orientation of actin filaments along microtubules, and thus a contribution to the organization of the cytoskeletal architecture. Links the actin microfilaments with the cortical microtubules in both cycling and non-cycling cells. Required for efficient cell elongation by its participation in the premitotic nuclear positioning. This is Kinesin-like protein KIN-14Q from Oryza sativa subsp. japonica (Rice).